A 433-amino-acid polypeptide reads, in one-letter code: Tyrosine--tRNA ligase (433 aa).

Tyr-34 provides a ligand contact to L-tyrosine. Positions 39 to 48 match the 'HIGH' region motif; sequence PTASSLHVGS. Positions 169 and 173 each coordinate L-tyrosine. Residues 229–233 carry the 'KMSKS' region motif; it reads KMGKT. Lys-232 contributes to the ATP binding site. The 69-residue stretch at 364–432 folds into the S4 RNA-binding domain; the sequence is IPAFVLFHTV…RYHTIVVRKG (69 aa).

The protein belongs to the class-I aminoacyl-tRNA synthetase family. TyrS type 1 subfamily. In terms of assembly, homodimer.

The protein resides in the cytoplasm. The catalysed reaction is tRNA(Tyr) + L-tyrosine + ATP = L-tyrosyl-tRNA(Tyr) + AMP + diphosphate + H(+). In terms of biological role, catalyzes the attachment of tyrosine to tRNA(Tyr) in a two-step reaction: tyrosine is first activated by ATP to form Tyr-AMP and then transferred to the acceptor end of tRNA(Tyr). In Desulfosudis oleivorans (strain DSM 6200 / JCM 39069 / Hxd3) (Desulfococcus oleovorans), this protein is Tyrosine--tRNA ligase.